A 503-amino-acid chain; its full sequence is Maturase K (503 aa).

This sequence belongs to the intron maturase 2 family. MatK subfamily.

It is found in the plastid. It localises to the chloroplast. Usually encoded in the trnK tRNA gene intron. Probably assists in splicing its own and other chloroplast group II introns. This chain is Maturase K, found in Purshia tridentata (Antelope bitterbrush).